A 242-amino-acid chain; its full sequence is Phosphatidylethanolamine-binding protein 4 (242 aa).

Residues methionine 1–threonine 26 form the signal peptide. A disordered region spans residues glutamate 31–arginine 50. A compositionally biased stretch (gly residues) spans glutamate 38–arginine 50. 2 N-linked (GlcNAc...) asparagine glycosylation sites follow: asparagine 77 and asparagine 139. The tract at residues aspartate 210–lysine 242 is important for secretion.

It belongs to the phosphatidylethanolamine-binding protein family.

The protein localises to the secreted. Promotes AKT phosphorylation, suggesting a possible role in the PI3K-AKT signaling pathway. This chain is Phosphatidylethanolamine-binding protein 4 (Pebp4), found in Mus musculus (Mouse).